A 408-amino-acid polypeptide reads, in one-letter code: Imidazolonepropionase (408 aa).

2 residues coordinate Fe(3+): His73 and His75. His73 and His75 together coordinate Zn(2+). Residues Arg82, Tyr145, and His178 each coordinate 4-imidazolone-5-propanoate. N-formimidoyl-L-glutamate is bound at residue Tyr145. His243 contacts Fe(3+). Residue His243 participates in Zn(2+) binding. A 4-imidazolone-5-propanoate-binding site is contributed by Gln246. A Fe(3+)-binding site is contributed by Asp318. Asp318 is a Zn(2+) binding site. Residues Asn320 and Gly322 each contribute to the N-formimidoyl-L-glutamate site. Ser323 serves as a coordination point for 4-imidazolone-5-propanoate.

Belongs to the metallo-dependent hydrolases superfamily. HutI family. The cofactor is Zn(2+). Requires Fe(3+) as cofactor.

Its subcellular location is the cytoplasm. It carries out the reaction 4-imidazolone-5-propanoate + H2O = N-formimidoyl-L-glutamate. It participates in amino-acid degradation; L-histidine degradation into L-glutamate; N-formimidoyl-L-glutamate from L-histidine: step 3/3. Catalyzes the hydrolytic cleavage of the carbon-nitrogen bond in imidazolone-5-propanoate to yield N-formimidoyl-L-glutamate. It is the third step in the universal histidine degradation pathway. In Shewanella sp. (strain W3-18-1), this protein is Imidazolonepropionase.